The sequence spans 232 residues: Large ribosomal subunit protein uL1 (232 aa).

It belongs to the universal ribosomal protein uL1 family. As to quaternary structure, part of the 50S ribosomal subunit.

Binds directly to 23S rRNA. The L1 stalk is quite mobile in the ribosome, and is involved in E site tRNA release. Functionally, protein L1 is also a translational repressor protein, it controls the translation of the L11 operon by binding to its mRNA. In Xylella fastidiosa (strain M23), this protein is Large ribosomal subunit protein uL1.